Here is a 211-residue protein sequence, read N- to C-terminus: N-(5'-phosphoribosyl)anthranilate isomerase (211 aa).

This sequence belongs to the TrpF family.

The catalysed reaction is N-(5-phospho-beta-D-ribosyl)anthranilate = 1-(2-carboxyphenylamino)-1-deoxy-D-ribulose 5-phosphate. Its pathway is amino-acid biosynthesis; L-tryptophan biosynthesis; L-tryptophan from chorismate: step 3/5. This is N-(5'-phosphoribosyl)anthranilate isomerase from Nitrosomonas europaea (strain ATCC 19718 / CIP 103999 / KCTC 2705 / NBRC 14298).